Reading from the N-terminus, the 464-residue chain is Protein FAM90A5 (464 aa).

Disordered regions lie at residues arginine 16 to leucine 42, proline 70 to alanine 389, and histidine 415 to proline 437. Basic and acidic residues-rich tracts occupy residues glycine 74–valine 89 and asparagine 97–arginine 114. Over residues leucine 180–leucine 197 the composition is skewed to low complexity.

Belongs to the FAM90 family.

The protein is Protein FAM90A5 of Homo sapiens (Human).